Here is a 306-residue protein sequence, read N- to C-terminus: tRNA dimethylallyltransferase 2 (306 aa).

Residue 11-18 (GPTASGKT) participates in ATP binding. A substrate-binding site is contributed by 13 to 18 (TASGKT). Positions 36–39 (DSRQ) are interaction with substrate tRNA.

The protein belongs to the IPP transferase family. In terms of assembly, monomer. It depends on Mg(2+) as a cofactor.

The catalysed reaction is adenosine(37) in tRNA + dimethylallyl diphosphate = N(6)-dimethylallyladenosine(37) in tRNA + diphosphate. In terms of biological role, catalyzes the transfer of a dimethylallyl group onto the adenine at position 37 in tRNAs that read codons beginning with uridine, leading to the formation of N6-(dimethylallyl)adenosine (i(6)A). This Bacteroides fragilis (strain ATCC 25285 / DSM 2151 / CCUG 4856 / JCM 11019 / LMG 10263 / NCTC 9343 / Onslow / VPI 2553 / EN-2) protein is tRNA dimethylallyltransferase 2.